The chain runs to 621 residues: Laccase-2 (621 aa).

The N-terminal stretch at M1–A23 is a signal peptide. The propeptide occupies A24 to S48. Cysteines 49 and 57 form a disulfide. Plastocyanin-like domains follow at residues T78–N201 and I210–N367. A glycan (N-linked (GlcNAc...) asparagine) is linked at N133. H138, H140, H183, and H185 together coordinate Cu cation. Cystine bridges form between C159–C586 and C343–C377. N261, N276, N289, N325, and N334 each carry an N-linked (GlcNAc...) asparagine glycan. N401, N421, and N441 each carry an N-linked (GlcNAc...) asparagine glycan. In terms of domain architecture, Plastocyanin-like 3 spans D430–R566. Cu cation-binding residues include H476, H479, H481, H548, C549, H550, and H554. A propeptide spanning residues K606 to N621 is cleaved from the precursor.

The protein belongs to the multicopper oxidase family. Monomer. The cofactor is Cu cation. Proteolytically processed at both its N-terminus and its C-terminus.

It is found in the secreted. The catalysed reaction is 4 hydroquinone + O2 = 4 benzosemiquinone + 2 H2O. In terms of biological role, probably involved in lignin degradation and in the detoxification of lignin-derived products in its natural habitat (herbivorous dung), which is rich in lignin of grasses and straw. Probably involved in melanin synthesis and in perithecia development. The protein is Laccase-2 (LAC2) of Podospora anserina (Pleurage anserina).